A 419-amino-acid chain; its full sequence is Tol-Pal system protein TolB (419 aa).

Residues 1 to 19 form the signal peptide; the sequence is MFNRIISLFLLLFTGQVIA.

This sequence belongs to the TolB family. The Tol-Pal system is composed of five core proteins: the inner membrane proteins TolA, TolQ and TolR, the periplasmic protein TolB and the outer membrane protein Pal. They form a network linking the inner and outer membranes and the peptidoglycan layer.

The protein localises to the periplasm. Functionally, part of the Tol-Pal system, which plays a role in outer membrane invagination during cell division and is important for maintaining outer membrane integrity. The sequence is that of Tol-Pal system protein TolB from Legionella pneumophila (strain Corby).